The chain runs to 118 residues: Cycloviolacin-O11 (118 aa).

The first 22 residues, 1–22, serve as a signal peptide directing secretion; sequence MEMKNMVVGLFLIAAFALPALA. Residues 23-84 constitute a propeptide that is removed on maturation; the sequence is TSFEKDFITH…THSNSINALG (62 aa). The segment at residues 85–115 is a cross-link (cyclopeptide (Gly-Asn)); that stretch reads GTLPCGESCVWIPCISAVVGCSCKSKVCYKN. 3 cysteine pairs are disulfide-bonded: cysteine 89–cysteine 105, cysteine 93–cysteine 107, and cysteine 98–cysteine 112. Residues 116 to 118 constitute a propeptide that is removed on maturation; sequence SLA.

In terms of processing, cycloviolacin-O11 is a cyclic peptide. In terms of tissue distribution, expressed in leaves, petals and petioles but not in roots and runners (at protein level).

Probably participates in a plant defense mechanism. This chain is Cycloviolacin-O11 (Voc2), found in Viola odorata (Sweet violet).